Here is a 290-residue protein sequence, read N- to C-terminus: Glycine--tRNA ligase alpha subunit (290 aa).

It belongs to the class-II aminoacyl-tRNA synthetase family. As to quaternary structure, tetramer of two alpha and two beta subunits.

It localises to the cytoplasm. It carries out the reaction tRNA(Gly) + glycine + ATP = glycyl-tRNA(Gly) + AMP + diphosphate. The protein is Glycine--tRNA ligase alpha subunit of Syntrophobacter fumaroxidans (strain DSM 10017 / MPOB).